The sequence spans 166 residues: Ribonuclease P protein component (166 aa).

It belongs to the RnpA family. In terms of assembly, consists of a catalytic RNA component (M1 or rnpB) and a protein subunit.

The catalysed reaction is Endonucleolytic cleavage of RNA, removing 5'-extranucleotides from tRNA precursor.. Its function is as follows. RNaseP catalyzes the removal of the 5'-leader sequence from pre-tRNA to produce the mature 5'-terminus. It can also cleave other RNA substrates such as 4.5S RNA. The protein component plays an auxiliary but essential role in vivo by binding to the 5'-leader sequence and broadening the substrate specificity of the ribozyme. The chain is Ribonuclease P protein component from Helicobacter pylori (strain HPAG1).